Consider the following 174-residue polypeptide: NADH-ubiquinone oxidoreductase chain 6 (174 aa).

6 helical membrane passes run 1–21 (MTYALFLLSVILVMGFVGFSS), 24–44 (SPIYGGLVLIISGAVGCAVIL), 47–67 (GGGYMGLVVFLVYLGGMMVVF), 86–106 (AEVLVSVLVGLVMEVGLVLWV), 111–131 (GVVVAVNFNSVGSWMIYEGEG), and 151–171 (WLVVVTGWTLFVGVYVVIEIA).

The protein belongs to the complex I subunit 6 family. As to quaternary structure, core subunit of respiratory chain NADH dehydrogenase (Complex I) which is composed of 45 different subunits.

The protein localises to the mitochondrion inner membrane. It carries out the reaction a ubiquinone + NADH + 5 H(+)(in) = a ubiquinol + NAD(+) + 4 H(+)(out). In terms of biological role, core subunit of the mitochondrial membrane respiratory chain NADH dehydrogenase (Complex I) which catalyzes electron transfer from NADH through the respiratory chain, using ubiquinone as an electron acceptor. Essential for the catalytic activity and assembly of complex I. The protein is NADH-ubiquinone oxidoreductase chain 6 (MT-ND6) of Pongo pygmaeus (Bornean orangutan).